The chain runs to 105 residues: BLOC-1-related complex subunit 7 (105 aa).

This sequence belongs to the BORCS7 family. In terms of assembly, component of the BLOC-one-related complex (BORC) which is composed of BLOC1S1, BLOC1S2, BORCS5, BORCS6, BORCS7, BORCS8, KXD1 and SNAPIN.

The protein resides in the lysosome membrane. As part of the BORC complex may play a role in lysosomes movement and localization at the cell periphery. Associated with the cytosolic face of lysosomes, the BORC complex may recruit ARL8B and couple lysosomes to microtubule plus-end-directed kinesin motor. This Mus musculus (Mouse) protein is BLOC-1-related complex subunit 7.